Reading from the N-terminus, the 315-residue chain is Transaldolase (315 aa).

The Schiff-base intermediate with substrate role is filled by Lys-125.

Belongs to the transaldolase family. Type 1 subfamily. As to quaternary structure, homodimer.

It is found in the cytoplasm. It carries out the reaction D-sedoheptulose 7-phosphate + D-glyceraldehyde 3-phosphate = D-erythrose 4-phosphate + beta-D-fructose 6-phosphate. The protein operates within carbohydrate degradation; pentose phosphate pathway; D-glyceraldehyde 3-phosphate and beta-D-fructose 6-phosphate from D-ribose 5-phosphate and D-xylulose 5-phosphate (non-oxidative stage): step 2/3. In terms of biological role, transaldolase is important for the balance of metabolites in the pentose-phosphate pathway. This is Transaldolase from Paracidovorax citrulli (strain AAC00-1) (Acidovorax citrulli).